Reading from the N-terminus, the 347-residue chain is GMP reductase (347 aa).

Residue 108–131 participates in NADP(+) binding; it reads ADFEKTKQILDLNPALNFVCIDVA. The K(+) site is built by G181 and G183. C186 (thioimidate intermediate) is an active-site residue. Position 216–239 (216–239) interacts with NADP(+); the sequence is IVSDGGCTTPGDVAKAFGGGADFV.

This sequence belongs to the IMPDH/GMPR family. GuaC type 1 subfamily. Homotetramer.

The catalysed reaction is IMP + NH4(+) + NADP(+) = GMP + NADPH + 2 H(+). In terms of biological role, catalyzes the irreversible NADPH-dependent deamination of GMP to IMP. It functions in the conversion of nucleobase, nucleoside and nucleotide derivatives of G to A nucleotides, and in maintaining the intracellular balance of A and G nucleotides. The sequence is that of GMP reductase from Shigella boydii serotype 18 (strain CDC 3083-94 / BS512).